Reading from the N-terminus, the 384-residue chain is G protein-coupled receptor 88 (384 aa).

Topologically, residues 1 to 35 (MTNSSSTSTSSTTGGSLLLLCEEEESWAGRRIPVS) are extracellular. Asparagine 3 carries an N-linked (GlcNAc...) asparagine glycan. The helical transmembrane segment at 36-56 (LLYSGLAIGGTLANGMVIYLV) threads the bilayer. Residues 57-73 (SSFRKLQTTSNAFIVNG) are Cytoplasmic-facing. Residues 74-94 (CAADLSVCALWMPQEAVLGLL) traverse the membrane as a helical segment. Over 95-116 (PTGSAEPPADWDGAGGSYRLLR) the chain is Extracellular. The helical transmembrane segment at 117-136 (GGLLGLGLTVSLLSHCLVAL) threads the bilayer. Over 137 to 158 (NRYLLITRAPATYQALYQRRHT) the chain is Cytoplasmic. A helical transmembrane segment spans residues 159–179 (AGMLALSWALALGLVLLLPPW). Topologically, residues 180 to 195 (APRPGAAPPRVHYPAL) are extracellular. The helical transmembrane segment at 196-216 (LAAAALLAQTALLLHCYLGIV) threads the bilayer. Over 217–285 (RRVRVSVKRV…RAQRRLSGLS (69 aa)) the chain is Cytoplasmic. Residues 286–306 (VLLLCCVFLLATQPLVWVSLA) form a helical membrane-spanning segment. At 307-310 (SGFS) the chain is on the extracellular side. A helical transmembrane segment spans residues 311 to 331 (LPVPWGVQAASWLLCCALSAL). The Cytoplasmic portion of the chain corresponds to 332–384 (NPLLYTWRNEEFRRSVRSVLPGVGDAAAAAVAATAVPAVSQAQLGTRAAGQHW).

The protein belongs to the G-protein coupled receptor 1 family. As to expression, expressed predominantly in the striatum.

It localises to the cell membrane. The protein localises to the cell projection. Its subcellular location is the cilium membrane. It is found in the cytoplasm. The protein resides in the nucleus. Functionally, orphan G protein-coupled receptor implicated in a large repertoire of behavioral responses that engage motor activities, spatial learning, and emotional processing. May play a role in the regulation of cognitive and motor function. Couples with the heterotrimeric G protein complex of the G(i) subfamily, consisting of GNAI1, GNB1 and GNG2, thereby acting through a G(i)-mediated pathway. Plays a role in the attenuation of D1 dopamine receptor (D1R)-mediated cAMP response in ciliated cells. In non-ciliated cells, involved in the inhibition of the beta-2 adrenergic receptor (B2AR) response. This is G protein-coupled receptor 88 (GPR88) from Homo sapiens (Human).